An 869-amino-acid chain; its full sequence is Kinesin-like protein KIN-10A (869 aa).

Residues 1 to 36 (MAPTPSSSRSNQTQYTLIRTPQTKQRLNFHSKTPNP) show a composition bias toward polar residues. Residues 1-50 (MAPTPSSSRSNQTQYTLIRTPQTKQRLNFHSKTPNPDGSKDPSPPEHPVE) form a disordered region. Over residues 38 to 50 (GSKDPSPPEHPVE) the composition is skewed to basic and acidic residues. The 320-residue stretch at 48-367 (PVEVIGRIRD…LEYGAKAKCI (320 aa)) folds into the Kinesin motor domain. Residue 129–136 (GPTGAGKS) coordinates ATP. Residues 393 to 515 (RIAAMDEFII…EIEVEFRRSN (123 aa)) adopt a coiled-coil conformation.

The protein belongs to the TRAFAC class myosin-kinesin ATPase superfamily. Kinesin family. KIN-10 subfamily. Binds microtubules.

It is found in the cytoplasm. The protein resides in the cytoskeleton. Its subcellular location is the phragmoplast. Its function is as follows. Probable plus end-directed motor protein that may contribute to the transport of Golgi-derived vesicles in the phragmoplast. The protein is Kinesin-like protein KIN-10A of Arabidopsis thaliana (Mouse-ear cress).